The primary structure comprises 198 residues: 7-methyl-GTP pyrophosphatase (198 aa).

D75 (proton acceptor) is an active-site residue.

Belongs to the Maf family. YceF subfamily. A divalent metal cation serves as cofactor.

It localises to the cytoplasm. It catalyses the reaction N(7)-methyl-GTP + H2O = N(7)-methyl-GMP + diphosphate + H(+). Nucleoside triphosphate pyrophosphatase that hydrolyzes 7-methyl-GTP (m(7)GTP). May have a dual role in cell division arrest and in preventing the incorporation of modified nucleotides into cellular nucleic acids. The sequence is that of 7-methyl-GTP pyrophosphatase from Bartonella quintana (strain Toulouse) (Rochalimaea quintana).